The primary structure comprises 402 residues: uncharacterized protein (402 aa).

9 helical membrane passes run 13-33, 68-88, 108-128, 149-169, 223-243, 261-281, 283-303, 327-347, and 353-373; these read IGVL…VNLA, FFIQ…GMVV, LMAL…GDIL, LLIW…LTSF, LNYF…AAAA, LWMA…VTDK, ICLL…VVYL, YLMQ…GLYG, and AGVL…HLWL.

The protein localises to the cell membrane. Its function is as follows. Involved in transport. This is an uncharacterized protein from Bacillus subtilis (strain 168).